A 140-amino-acid polypeptide reads, in one-letter code: Ribonuclease P protein component (140 aa).

The interval Arg-33–Ala-54 is disordered.

The protein belongs to the RnpA family. In terms of assembly, consists of a catalytic RNA component (M1 or rnpB) and a protein subunit.

The enzyme catalyses Endonucleolytic cleavage of RNA, removing 5'-extranucleotides from tRNA precursor.. RNaseP catalyzes the removal of the 5'-leader sequence from pre-tRNA to produce the mature 5'-terminus. It can also cleave other RNA substrates such as 4.5S RNA. The protein component plays an auxiliary but essential role in vivo by binding to the 5'-leader sequence and broadening the substrate specificity of the ribozyme. The polypeptide is Ribonuclease P protein component (Trichormus variabilis (strain ATCC 29413 / PCC 7937) (Anabaena variabilis)).